The following is a 176-amino-acid chain: F(420)H(2) dehydrogenase subunit J (176 aa).

5 consecutive transmembrane segments (helical) span residues 13-33 (TAVF…VVIA), 39-59 (AGLA…LLNA), 64-84 (VIQV…AVML), 99-119 (PLAF…AFGT), and 140-160 (IGML…IVLL).

This sequence belongs to the complex I subunit 6 family. The FPO complex is composed of at least 13 different subunits. FpoA, FpoH, FpoJ, FpoK, FpoL, FpoM and FpoN proteins constitute the membrane sector of the complex.

The protein resides in the cell membrane. The catalysed reaction is methanophenazine + reduced coenzyme F420-(gamma-L-Glu)(n) = dihydromethanophenazine + oxidized coenzyme F420-(gamma-L-Glu)(n) + H(+). Its function is as follows. Component of the F(420)H(2) dehydrogenase (FPO complex) which is part of the energy-conserving F(420)H(2):heterodisulfide oxidoreductase system. The membrane-bound electron transfer system of the complex plays an important role in the metabolism of methylotrophic methanogens when the organisms grow on methanol or methylamines. Catalyzes the oxidation of methanophenazine to dihydromethanophenazine. It shuttles electrons from F(420)H(2), via FAD and iron-sulfur (Fe-S) centers, to methanophenazine (an electron carrier in the membrane). It couples the redox reaction to proton translocation (for every two electrons transferred, two hydrogen ions are translocated across the cytoplasmic membrane), and thus conserves the redox energy in a proton gradient. It also catalyzes the oxidation of F(420)H(2) with quinones such as 2,3-dimethyl-1,4-naphthoquinone, 2-methyl-1,4-naphthoquinone and tetramethyl-p-benzoquinone. The sequence is that of F(420)H(2) dehydrogenase subunit J (fpoJ) from Methanosarcina mazei (strain ATCC BAA-159 / DSM 3647 / Goe1 / Go1 / JCM 11833 / OCM 88) (Methanosarcina frisia).